The sequence spans 210 residues: MKTLKIPEATIIRLSVYSRHLTDVDRKGIVTISSGDIAEGVGVSPAQVRKDLAYFGEFGTRGVGYNVKDLHRHILKILGLSQDWSVCLVGMGNLGLALTTYKGFRERGFIITSIFDNDPQKIGTTVNGVEVLPVDRLEEVAKANKTQIGIISVPSPYAQEIADKLISAGVQAILNFAPVVLNVPPEVELRNVDLAVNLEVLTFNVGTRRA.

Residues 16 to 55 (VYSRHLTDVDRKGIVTISSGDIAEGVGVSPAQVRKDLAYF) constitute a DNA-binding region (H-T-H motif). Residue 90-95 (GMGNLG) participates in NAD(+) binding.

Belongs to the transcriptional regulatory Rex family. In terms of assembly, homodimer.

The protein localises to the cytoplasm. Functionally, modulates transcription in response to changes in cellular NADH/NAD(+) redox state. The chain is Redox-sensing transcriptional repressor Rex from Desulfitobacterium hafniense (strain DSM 10664 / DCB-2).